The following is a 501-amino-acid chain: Xylulose kinase (501 aa).

A substrate-binding site is contributed by M81 to H82. The active-site Proton acceptor is the D239.

The protein belongs to the FGGY kinase family.

It catalyses the reaction D-xylulose + ATP = D-xylulose 5-phosphate + ADP + H(+). Its function is as follows. Catalyzes the phosphorylation of D-xylulose to D-xylulose 5-phosphate. The protein is Xylulose kinase of Lactococcus lactis subsp. lactis (strain IL1403) (Streptococcus lactis).